The primary structure comprises 444 residues: ATP-dependent protease ATPase subunit HslU (444 aa).

Residues I20 and 62 to 67 contribute to the ATP site; that span reads GVGKTE. The disordered stretch occupies residues 137 to 162; sequence LVPPSRGTSGEPERGEDSNARQTFRK. ATP-binding residues include D257, E322, and R394.

This sequence belongs to the ClpX chaperone family. HslU subfamily. In terms of assembly, a double ring-shaped homohexamer of HslV is capped on each side by a ring-shaped HslU homohexamer. The assembly of the HslU/HslV complex is dependent on binding of ATP.

It is found in the cytoplasm. In terms of biological role, ATPase subunit of a proteasome-like degradation complex; this subunit has chaperone activity. The binding of ATP and its subsequent hydrolysis by HslU are essential for unfolding of protein substrates subsequently hydrolyzed by HslV. HslU recognizes the N-terminal part of its protein substrates and unfolds these before they are guided to HslV for hydrolysis. The protein is ATP-dependent protease ATPase subunit HslU of Bordetella petrii (strain ATCC BAA-461 / DSM 12804 / CCUG 43448).